A 348-amino-acid polypeptide reads, in one-letter code: D-erythrose-4-phosphate dehydrogenase (348 aa).

Residues 12-13 (RI) and arginine 81 each bind NAD(+). Substrate is bound by residues 154–156 (SCT), arginine 200, 213–214 (TK), and arginine 236. Cysteine 155 (nucleophile) is an active-site residue. Residue asparagine 318 coordinates NAD(+).

The protein belongs to the glyceraldehyde-3-phosphate dehydrogenase family. Epd subfamily. In terms of assembly, homotetramer.

Its subcellular location is the cytoplasm. It carries out the reaction D-erythrose 4-phosphate + NAD(+) + H2O = 4-phospho-D-erythronate + NADH + 2 H(+). The protein operates within cofactor biosynthesis; pyridoxine 5'-phosphate biosynthesis; pyridoxine 5'-phosphate from D-erythrose 4-phosphate: step 1/5. Its function is as follows. Catalyzes the NAD-dependent conversion of D-erythrose 4-phosphate to 4-phosphoerythronate. The polypeptide is D-erythrose-4-phosphate dehydrogenase (Salmonella gallinarum (strain 287/91 / NCTC 13346)).